A 70-amino-acid chain; its full sequence is MSKKTTKDVRNLSDSEMSDKIQNLRKELFDLRFKQATRQLAKTHRFKEARTELAQLLTVSNERSRSNTSS.

The protein belongs to the universal ribosomal protein uL29 family.

This chain is Large ribosomal subunit protein uL29, found in Prochlorococcus marinus (strain NATL1A).